A 266-amino-acid chain; its full sequence is Hydroxyethylthiazole kinase (266 aa).

Residue M46 participates in substrate binding. Residues K122 and T166 each coordinate ATP. G193 is a substrate binding site.

The protein belongs to the Thz kinase family. The cofactor is Mg(2+).

It catalyses the reaction 5-(2-hydroxyethyl)-4-methylthiazole + ATP = 4-methyl-5-(2-phosphooxyethyl)-thiazole + ADP + H(+). It participates in cofactor biosynthesis; thiamine diphosphate biosynthesis; 4-methyl-5-(2-phosphoethyl)-thiazole from 5-(2-hydroxyethyl)-4-methylthiazole: step 1/1. Functionally, catalyzes the phosphorylation of the hydroxyl group of 4-methyl-5-beta-hydroxyethylthiazole (THZ). This chain is Hydroxyethylthiazole kinase, found in Caldivirga maquilingensis (strain ATCC 700844 / DSM 13496 / JCM 10307 / IC-167).